Here is a 381-residue protein sequence, read N- to C-terminus: MNDAVNPTAAKTVTGWPVSEAAAGAILTIDLGAIRENYRRLKALLGGVHCAGVVKANGYGLGAAKVAAALTREGCDIFFVALLAEGIALRKAVGTGPDIYVLNGLPPGSEPEAVAAGLCAVINSGAQLKAWRAAVHDAGRRLPAAIQVDSGMSRLGMAPAEVEALAGDSSAFDGIDIKYVMSHLACADEPRHPANEQQRLAFERLRAMLPRAPASLANSSGIFLGPSYHHDLARPGAALYGINPTPGEPNPMLPVVWLQAKVAQTRRIEKGAGIGYGHSYHADGPLSLATISFGYADGWLRRSASAAWFEGVRLPFLGRVSMDSIILDISALPPGRLREGDLVELLGPSQSVDDAAGHAGTIGYEILASLGPRFHRHYVGG.

Lys55 (proton acceptor; specific for D-alanine) is an active-site residue. Lys55 carries the post-translational modification N6-(pyridoxal phosphate)lysine. Arg154 contributes to the substrate binding site. Tyr276 functions as the Proton acceptor; specific for L-alanine in the catalytic mechanism. Position 322 (Met322) interacts with substrate.

Belongs to the alanine racemase family. The cofactor is pyridoxal 5'-phosphate.

It catalyses the reaction L-alanine = D-alanine. Functionally, isomerizes L-alanine to D-alanine which is then oxidized to pyruvate by DadA. The chain is Alanine racemase, catabolic (dadB) from Mesorhizobium japonicum (strain LMG 29417 / CECT 9101 / MAFF 303099) (Mesorhizobium loti (strain MAFF 303099)).